A 1004-amino-acid polypeptide reads, in one-letter code: Kinesin-like protein KIN-7I (1004 aa).

The Kinesin motor domain maps to 6-326 (KILVSVRVRP…LLFATCAKEV (321 aa)). 89 to 96 (GQTSSGKT) contributes to the ATP binding site. Coiled-coil stretches lie at residues 335–402 (VVSE…AQSR), 517–576 (KKEY…QKQS), and 634–661 (SVEK…DQSE). Disordered stretches follow at residues 567 to 599 (EQSV…KSLP), 628 to 671 (SQQT…PEDE), and 802 to 830 (TMQH…GEKT). Composition is skewed to basic and acidic residues over residues 569–582 (SVEK…KEEM) and 634–652 (SVEK…EDLK). Residues 653–663 (QNLSMDQSEQL) show a composition bias toward polar residues. Residue Lys-881 forms a Glycyl lysine isopeptide (Lys-Gly) (interchain with G-Cter in ubiquitin) linkage.

This sequence belongs to the TRAFAC class myosin-kinesin ATPase superfamily. Kinesin family. KIN-7 subfamily.

The sequence is that of Kinesin-like protein KIN-7I from Arabidopsis thaliana (Mouse-ear cress).